A 210-amino-acid polypeptide reads, in one-letter code: Orotate phosphoribosyltransferase (210 aa).

5-phospho-alpha-D-ribose 1-diphosphate contacts are provided by residues Arg94, Lys98, His100, and 120 to 128 (EDLISTGGS). Ser124 lines the orotate pocket.

Belongs to the purine/pyrimidine phosphoribosyltransferase family. PyrE subfamily. As to quaternary structure, homodimer. It depends on Mg(2+) as a cofactor.

It catalyses the reaction orotidine 5'-phosphate + diphosphate = orotate + 5-phospho-alpha-D-ribose 1-diphosphate. It functions in the pathway pyrimidine metabolism; UMP biosynthesis via de novo pathway; UMP from orotate: step 1/2. Its function is as follows. Catalyzes the transfer of a ribosyl phosphate group from 5-phosphoribose 1-diphosphate to orotate, leading to the formation of orotidine monophosphate (OMP). The chain is Orotate phosphoribosyltransferase from Bacillus cereus (strain ATCC 10987 / NRS 248).